We begin with the raw amino-acid sequence, 465 residues long: Probable inactive receptor-like kinase BSK12 (465 aa).

The span at 1–12 (MGCCYSLSSTVD) shows a compositional bias: polar residues. The interval 1–34 (MGCCYSLSSTVDPVQDHTTDASSEPRNGGGEDPP) is disordered. Glycine 2 carries N-myristoyl glycine lipidation. 2 S-palmitoyl cysteine lipidation sites follow: cysteine 3 and cysteine 4. A Protein kinase domain is found at 50–291 (FSPENIVSDQ…KEIVATLETL (242 aa)). ATP contacts are provided by residues 56–64 (VSDQTSDVV) and lysine 78.

Belongs to the protein kinase superfamily. Ser/Thr protein kinase family. In terms of assembly, interacts with YDA. Diacylation-mediated membrane association is essential for BSK12 function. Expressed at the mRNA level in the sperm cells in mature pollen, but the protein is only detectable in the zygote and the micropylar endosperm upon fertilization.

It is found in the cell membrane. Its function is as follows. Probable inactive protein kinase that activates the YODA MAP kinase cascade, which regulates the asymmetric first division and embryo polarity, by promoting the elongation of the zygote and the development of its basal daughter cell into the extra-embryonic suspensor. Acts as an adapter at the plasma membrane, possibly by recruiting and binding an activator. The protein is Probable inactive receptor-like kinase BSK12 of Arabidopsis thaliana (Mouse-ear cress).